A 197-amino-acid chain; its full sequence is Phosphoheptose isomerase (197 aa).

The region spanning 36–197 (MVNALLNEGK…IDSQLFGSEE (162 aa)) is the SIS domain. Residue 51-53 (NGG) participates in substrate binding. 2 residues coordinate Zn(2+): His-60 and Glu-64. Substrate is bound by residues Glu-64, 93–94 (ND), 119–121 (STS), Ser-124, and Gln-174. The Zn(2+) site is built by Gln-174 and His-182.

The protein belongs to the SIS family. GmhA subfamily. Homotetramer. Zn(2+) is required as a cofactor.

Its subcellular location is the cytoplasm. It catalyses the reaction 2 D-sedoheptulose 7-phosphate = D-glycero-alpha-D-manno-heptose 7-phosphate + D-glycero-beta-D-manno-heptose 7-phosphate. It participates in carbohydrate biosynthesis; D-glycero-D-manno-heptose 7-phosphate biosynthesis; D-glycero-alpha-D-manno-heptose 7-phosphate and D-glycero-beta-D-manno-heptose 7-phosphate from sedoheptulose 7-phosphate: step 1/1. In terms of biological role, catalyzes the isomerization of sedoheptulose 7-phosphate in D-glycero-D-manno-heptose 7-phosphate. The chain is Phosphoheptose isomerase from Pseudomonas putida (strain GB-1).